A 199-amino-acid chain; its full sequence is Recombination protein RecR (199 aa).

A C4-type zinc finger spans residues 57-72 (CAECRTFTEEEVCHIC). A Toprim domain is found at 81–176 (GQICVVESPA…EASRIAHGVP (96 aa)).

Belongs to the RecR family.

Its function is as follows. May play a role in DNA repair. It seems to be involved in an RecBC-independent recombinational process of DNA repair. It may act with RecF and RecO. This Vibrio parahaemolyticus serotype O3:K6 (strain RIMD 2210633) protein is Recombination protein RecR.